Reading from the N-terminus, the 323-residue chain is MAEISDITTQTQTVVLDIENYQSIDDSRSSDLSAPLVSVSFVQKLIGEFVGTFTMIFAGCSAIVVNETYGKPVTLPGIALVWGLVVTVMIYSIGHVSGAHFNPAVSIAFASSKKFPFNQVPGYIAAQLLGSTLAAAVLRLVFHLDDDVCSLKGDVYVGTYPSNSNTTSFVMEFIATFNLMFVISAVATDKRATGSFAGIAIGATIVLDILFSGPISGASMNPARSLGPALIWGCYKDLWLYIVSPVIGALSGAWTYGLLRSTKKSYSEIIRPNCNKVSSRDRQEASQDEICVLRVVDPANQNYFICSSPTDINGKCNVTCKLA.

Position 1 is an N-acetylmethionine (Met1). 2 helical membrane passes run 45 to 65 (LIGEFVGTFTMIFAGCSAIVV) and 73 to 93 (VTLPGIALVWGLVVTVMIYSI). Positions 102-104 (NPA) match the NPA 1 motif. A run of 3 helical transmembrane segments spans residues 122–142 (GYIAAQLLGSTLAAAVLRLVF), 167–187 (TSFVMEFIATFNLMFVISAVA), and 196–216 (FAGIAIGATIVLDILFSGPIS). Positions 221-223 (NPA) match the NPA 2 motif. Residues 239–259 (WLYIVSPVIGALSGAWTYGLL) form a helical membrane-spanning segment.

The protein belongs to the MIP/aquaporin (TC 1.A.8) family. NIP (TC 1.A.8.12) subfamily.

It is found in the membrane. Its function is as follows. Aquaporins facilitate the transport of water and small neutral solutes across cell membranes. The chain is Aquaporin NIP3-1 (NIP3-1) from Arabidopsis thaliana (Mouse-ear cress).